A 117-amino-acid polypeptide reads, in one-letter code: Putative iron-sulfur cluster insertion protein ErpA (117 aa).

Cys-45, Cys-109, and Cys-111 together coordinate iron-sulfur cluster.

This sequence belongs to the HesB/IscA family. Homodimer. Iron-sulfur cluster serves as cofactor.

Functionally, required for insertion of 4Fe-4S clusters. This is Putative iron-sulfur cluster insertion protein ErpA from Chromobacterium violaceum (strain ATCC 12472 / DSM 30191 / JCM 1249 / CCUG 213 / NBRC 12614 / NCIMB 9131 / NCTC 9757 / MK).